The following is a 511-amino-acid chain: Exodeoxyribonuclease 7 large subunit (511 aa).

It belongs to the XseA family. As to quaternary structure, heterooligomer composed of large and small subunits.

Its subcellular location is the cytoplasm. The catalysed reaction is Exonucleolytic cleavage in either 5'- to 3'- or 3'- to 5'-direction to yield nucleoside 5'-phosphates.. In terms of biological role, bidirectionally degrades single-stranded DNA into large acid-insoluble oligonucleotides, which are then degraded further into small acid-soluble oligonucleotides. The polypeptide is Exodeoxyribonuclease 7 large subunit (Brucella suis biovar 1 (strain 1330)).